The following is a 241-amino-acid chain: MLVVGLTGGIACGKSTVSRRLRDKYKLPIVDADKIARQVVEPGQNAYDQIVLYFKDKIPNLLLEDGHLNREALGKWVFSHKEDLQALNGITHPAIRYAMFKEIGYYYLKGYRMCVLDVPLLFEGNLDSICGVTVSVICTQELQLERLMTRNPELSEEDAKNRLNSQMSTEERMARSDYILQNNSTLVDLYEQIESVVKKIQPSKLRTVLEYFPPFGAVSASSIVMSRLLMKKLQNKKSSAV.

Residues 3 to 211 form the DPCK domain; it reads VVGLTGGIAC…PSKLRTVLEY (209 aa). ATP is bound at residue 8 to 15; the sequence is GGIACGKS.

Belongs to the CoaE family.

The protein resides in the endoplasmic reticulum. Its subcellular location is the mitochondrion. It is found in the nucleus. The catalysed reaction is 3'-dephospho-CoA + ATP = ADP + CoA + H(+). It participates in cofactor biosynthesis; coenzyme A biosynthesis; CoA from (R)-pantothenate: step 5/5. In terms of biological role, catalyzes the phosphorylation of the 3'-hydroxyl group of dephosphocoenzyme A to form coenzyme A. The polypeptide is Dephospho-CoA kinase CAB5 (CAB5) (Saccharomyces cerevisiae (strain ATCC 204508 / S288c) (Baker's yeast)).